The sequence spans 61 residues: [Val1,Thr6]-bradykinyl-Val,Asp (61 aa).

An N-terminal signal peptide occupies residues 1-22; the sequence is MAFLKKSLFLVLFLGVVSLSFC. A propeptide spanning residues 23-48 is cleaved from the precursor; it reads EEEEREEHEEEKREAEAAESAENLIS. The disordered stretch occupies residues 27 to 61; it reads REEHEEEKREAEAAESAENLISKRVPPGFTPFRVD.

As to expression, expressed by the skin glands. Expression levels in inguinal glands and granular glands are virtually the same.

Its subcellular location is the secreted. Functionally, induces contraction of rat ileum smooth muscle (EC(50)=2.73 uM) but has no activity towards rat smooth muscle from tail artery, urinary bladder or uterus. Binds to both bradykinin receptor B1 (BDKRB1) and B2 (BDKRB2); the effect via BDKRB1 is stronger. This Physalaemus nattereri (Cuyaba dwarf frog) protein is [Val1,Thr6]-bradykinyl-Val,Asp.